A 239-amino-acid polypeptide reads, in one-letter code: Ribosomal RNA small subunit methyltransferase G (239 aa).

Residues glycine 77, phenylalanine 82, 128–129 (AE), and arginine 146 each bind S-adenosyl-L-methionine. The tract at residues 215-239 (DKKRQTPKKYPRKPGTPNKTPLLEK) is disordered.

This sequence belongs to the methyltransferase superfamily. RNA methyltransferase RsmG family.

It is found in the cytoplasm. Specifically methylates the N7 position of guanine in position 535 of 16S rRNA. This Staphylococcus aureus (strain bovine RF122 / ET3-1) protein is Ribosomal RNA small subunit methyltransferase G.